Here is a 746-residue protein sequence, read N- to C-terminus: Centromere protein I (746 aa).

Positions methionine 1–glutamine 24 are disordered.

It belongs to the CENP-I/CTF3 family. Component of the CENPA-CAD complex, composed of CENPI, CENPK, CENPL, CENPO, CENPP, CENPQ, CENPR and CENPS. The CENPA-CAD complex interacts with the CENPA-NAC complex, at least composed of CENPA, CENPC, CENPH, CENPM, CENPN, CENPT and CENPU. Interacts with SENP6. Post-translationally, sumoylated. Sumoylated form can be polyubiquitinated by RNF4, leading to its degradation. Desumoylation by SENP6 prevents its degradation.

It localises to the nucleus. The protein localises to the chromosome. It is found in the centromere. In terms of biological role, component of the CENPA-CAD (nucleosome distal) complex, a complex recruited to centromeres which is involved in assembly of kinetochore proteins, mitotic progression and chromosome segregation. May be involved in incorporation of newly synthesized CENPA into centromeres via its interaction with the CENPA-NAC complex. Required for the localization of CENPF, MAD1L1 and MAD2 (MAD2L1 or MAD2L2) to kinetochores. Involved in the response of gonadal tissues to follicle-stimulating hormone. The protein is Centromere protein I (Cenpi) of Mus musculus (Mouse).